Consider the following 530-residue polypeptide: GMP synthase [glutamine-hydrolyzing] (530 aa).

One can recognise a Glutamine amidotransferase type-1 domain in the interval 4 to 205 (RILILDYGSQ…VKDICGCEGD (202 aa)). Cysteine 84 serves as the catalytic Nucleophile. Catalysis depends on residues histidine 179 and glutamate 181. The region spanning 206–398 (WNMPDYISEA…LGLPPQMVYR (193 aa)) is the GMPS ATP-PPase domain. 233–239 (SGGVDSS) serves as a coordination point for ATP.

As to quaternary structure, homodimer.

The enzyme catalyses XMP + L-glutamine + ATP + H2O = GMP + L-glutamate + AMP + diphosphate + 2 H(+). The protein operates within purine metabolism; GMP biosynthesis; GMP from XMP (L-Gln route): step 1/1. Catalyzes the synthesis of GMP from XMP. The chain is GMP synthase [glutamine-hydrolyzing] from Bordetella bronchiseptica (strain ATCC BAA-588 / NCTC 13252 / RB50) (Alcaligenes bronchisepticus).